The following is a 304-amino-acid chain: tRNA (guanine(9)-N1)-methyltransferase (304 aa).

Composition is skewed to basic and acidic residues over residues 1–26 and 42–72; these read MENK…KNET and RQQE…KRKI. Positions 1–72 are disordered; sequence MENKDALDIG…LRKEERKRKI (72 aa). Residues 81–276 enclose the SAM-dependent MTase TRM10-type domain; the sequence is QKKRIRLGKV…EVIPKRKGIL (196 aa). Residues Leu183, Gly203, 207–211, Cys215, Leu229, and 241–243 each bind S-adenosyl-L-methionine; these read DKNRY and KIL. The active-site Proton acceptor is Asp207. Residues 282 to 304 are disordered; it reads SFDVSEDTRSQSNQSDSELEKEN. Residue Ser296 is modified to Phosphoserine.

It belongs to the class IV-like SAM-binding methyltransferase superfamily. TRM10 family. As to quaternary structure, monomer.

The protein resides in the cytoplasm. It is found in the nucleus. It carries out the reaction guanosine(9) in tRNA + S-adenosyl-L-methionine = N(1)-methylguanosine(9) in tRNA + S-adenosyl-L-homocysteine + H(+). In terms of biological role, S-adenosyl-L-methionine-dependent guanine N(1)-methyltransferase that catalyzes the formation of N(1)-methylguanine at position 9 (m1G9) in cytoplasmic tRNA. This Schizosaccharomyces pombe (strain 972 / ATCC 24843) (Fission yeast) protein is tRNA (guanine(9)-N1)-methyltransferase.